The primary structure comprises 513 residues: Palmitoyltransferase ZDHHC14 (513 aa).

The Cytoplasmic portion of the chain corresponds to 1 to 59 (MHLGVEEPIRECQYNQICTHNSSPMDTPHIKKKKNKRKWQVFPGRNRFYCNGRIMMAKQ). A helical transmembrane segment spans residues 60-80 (TGVFYLTMVLILVTSGLFFAF). Residues 81-88 (DCPFLASN) are Lumenal-facing. A helical membrane pass occupies residues 89–109 (LTPAIPAIGGVLFVFVMGMLL). At 110–207 (RASFSDPGVL…GNCVGRRNYR (98 aa)) the chain is on the cytoplasmic side. The DHHC domain maps to 164–214 (KYCFTCKIFRPPRASHCSLCDNCVDRFDHHCPWVGNCVGRRNYRFFYLFIL). Catalysis depends on Cys-194, which acts as the S-palmitoyl cysteine intermediate. The helical transmembrane segment at 208-228 (FFYLFILSLSFLTIFIFAFVI) threads the bilayer. Residues 229–266 (THVILNALRKALALSTAADFEAVQKDPTGLAFLVLSKT) are Lumenal-facing. The helical transmembrane segment at 267-287 (ALLDILEVVVCFFSVWSIVGL) threads the bilayer. Over 288 to 513 (SGFHTYLISS…VRGLVKLSSV (226 aa)) the chain is Cytoplasmic. The disordered stretch occupies residues 348-369 (FIQPDTPQPATQTNGTSACPPN). The segment covering 355–369 (QPATQTNGTSACPPN) has biased composition (polar residues).

This sequence belongs to the DHHC palmitoyltransferase family. ERF2/ZDHHC9 subfamily.

The protein localises to the endoplasmic reticulum membrane. The protein resides in the golgi apparatus membrane. The catalysed reaction is L-cysteinyl-[protein] + hexadecanoyl-CoA = S-hexadecanoyl-L-cysteinyl-[protein] + CoA. Palmitoyltransferase that could catalyze the addition of palmitate onto various protein substrates. This is Palmitoyltransferase ZDHHC14 (zdhhc14) from Danio rerio (Zebrafish).